A 198-amino-acid chain; its full sequence is Recombination protein RecR (198 aa).

A C4-type zinc finger spans residues 58–73 (CSVCNNLTEKDPCDFC). The Toprim domain occupies 81 to 175 (NLICVVESPK…KVTRIAHGLP (95 aa)).

It belongs to the RecR family.

Its function is as follows. May play a role in DNA repair. It seems to be involved in an RecBC-independent recombinational process of DNA repair. It may act with RecF and RecO. This Halothermothrix orenii (strain H 168 / OCM 544 / DSM 9562) protein is Recombination protein RecR.